The sequence spans 443 residues: UPF0656 protein C926.02 (443 aa).

This sequence belongs to the UPF0656 family.

The protein resides in the cytoplasm. It localises to the nucleus. This chain is UPF0656 protein C926.02, found in Schizosaccharomyces pombe (strain 972 / ATCC 24843) (Fission yeast).